The following is a 429-amino-acid chain: MANVVVVGSQWGDEGKGKIVDWLSERADVIVRYQGGHNAGHTLVIDGVSYKLSLLPSGLVRGKLSVIGNGVVVDPHHFVAEVEKLRGQGIDVTPDVLRVAENAPLILSIHRELDAMREGSNSGLKIGTTKRGIGPAYEDKVGRRAIRVIDLTEPETLRPKVERLLAHHNSLRRGMGLEEIAVETILTELTSVADQILPYIDQVWRVLDERRKAGARILFEGAQGALLDNDHGTYPFVTSSNTVAGQAAAGSGLGPTAIGYVLGITKAYTTRVGEGPFPTELNDEIGEFLGTKGHEFGVVTGRKRRCGWFDAVIVRQTVRTSGINGIALTKLDVLDGLEEIKICVAYKLDGKRIDYLPSSMGAQARVKPIYETLPGWSETTAGARSWNDLPAQAVKYVRHIEELIGAPVAMLSTSPEREDTILVTDPFHD.

Residues 12-18 and 40-42 each bind GTP; these read GDEGKGK and GHT. Residue Asp13 is the Proton acceptor of the active site. Residues Asp13 and Gly40 each contribute to the Mg(2+) site. Residues 13–16, 38–41, Thr129, Arg143, Gln223, Thr238, and Arg302 each bind IMP; these read DEGK and NAGH. His41 (proton donor) is an active-site residue. 298-304 serves as a coordination point for substrate; the sequence is VVTGRKR. GTP contacts are provided by residues Arg304, 330 to 332, and 412 to 414; these read KLD and STS.

Belongs to the adenylosuccinate synthetase family. Homodimer. The cofactor is Mg(2+).

It is found in the cytoplasm. It carries out the reaction IMP + L-aspartate + GTP = N(6)-(1,2-dicarboxyethyl)-AMP + GDP + phosphate + 2 H(+). It participates in purine metabolism; AMP biosynthesis via de novo pathway; AMP from IMP: step 1/2. Plays an important role in the de novo pathway of purine nucleotide biosynthesis. Catalyzes the first committed step in the biosynthesis of AMP from IMP. The sequence is that of Adenylosuccinate synthetase from Brucella ovis (strain ATCC 25840 / 63/290 / NCTC 10512).